Here is a 37-residue protein sequence, read N- to C-terminus: Large ribosomal subunit protein bL36 (37 aa).

It belongs to the bacterial ribosomal protein bL36 family.

The sequence is that of Large ribosomal subunit protein bL36 from Nocardioides sp. (strain ATCC BAA-499 / JS614).